We begin with the raw amino-acid sequence, 201 residues long: MEKFTTLTGVAAPLPMINVDTDMIIPKQFLKTIKRTGLGKNLFDEMRYTQDGKEVPDFVLNKPAYRSAKILVAGANFGCGSSREHAPWAIGDFGIRCVIAPSFADIFFNNCFKNGILPIKLPQEQVDKLLDDANRGSNAIVTVDLARQVITGPDGGSISFEVDPFRKHCLLNGLDDIGLTLQREDKIAAFEESRKTSSPWL.

It belongs to the LeuD family. LeuD type 1 subfamily. As to quaternary structure, heterodimer of LeuC and LeuD.

The catalysed reaction is (2R,3S)-3-isopropylmalate = (2S)-2-isopropylmalate. It participates in amino-acid biosynthesis; L-leucine biosynthesis; L-leucine from 3-methyl-2-oxobutanoate: step 2/4. In terms of biological role, catalyzes the isomerization between 2-isopropylmalate and 3-isopropylmalate, via the formation of 2-isopropylmaleate. This chain is 3-isopropylmalate dehydratase small subunit, found in Paramagnetospirillum magneticum (strain ATCC 700264 / AMB-1) (Magnetospirillum magneticum).